A 551-amino-acid polypeptide reads, in one-letter code: Tropolone cluster transcription factor tropK (551 aa).

The tract at residues 1–21 (MSVAIKMSTNTVGGQSTRQPP) is disordered. Residues 7 to 20 (MSTNTVGGQSTRQP) are compositionally biased toward polar residues. Residues 25–52 (CLHCRNKKMKCDALQPRCKNCFNAGVEC) constitute a DNA-binding region (zn(2)-C6 fungal-type).

It localises to the nucleus. In terms of biological role, transcription factor that regulates the expression of the gene cluster that mediates the biosynthesis tropolone class of fungal maleic anhydrides, including stipitaldehydic, stipitatonic and stipitatic acids. The sequence is that of Tropolone cluster transcription factor tropK from Talaromyces stipitatus (strain ATCC 10500 / CBS 375.48 / QM 6759 / NRRL 1006) (Penicillium stipitatum).